The sequence spans 722 residues: Pesticidal crystal protein Cry22Aa (722 aa).

Its function is as follows. Promotes colloidosmotic lysis by binding to the midgut epithelial cells of hymenopteran species. The polypeptide is Pesticidal crystal protein Cry22Aa (cry22Aa) (Bacillus thuringiensis).